Reading from the N-terminus, the 41-residue chain is U-theraphotoxin-Lk1a (41 aa).

Intrachain disulfides connect C1/C16, C8/C21, and C15/C36.

The protein belongs to the neurotoxin 14 (magi-1) family. 08 (Ltx-4) subfamily. In terms of tissue distribution, expressed by the venom gland.

Its subcellular location is the secreted. Toxin that causes irreversible contractile paralysis in adult Aedes aegypti resulting in 100% mortality after 24 hours. This Lasiodora klugi (Bahia scarlet tarantula) protein is U-theraphotoxin-Lk1a.